The chain runs to 1665 residues: Cortactin-binding protein 2 (1665 aa).

Disordered regions lie at residues 1–23 (MATD…AGAT), 201–235 (EEKK…SEFD), 360–441 (ASHG…LHPG), 455–480 (GNAN…PTSR), and 499–617 (RFTS…PKPS). Residues 120–276 (KMQERMSTQL…EQLKRGNDNK (157 aa)) adopt a coiled-coil conformation. Over residues 385 to 395 (GPSTGSTADLT) the composition is skewed to polar residues. At R499 the chain carries Asymmetric dimethylarginine. The span at 584–594 (TVASPPSSLPQ) shows a compositional bias: polar residues. ANK repeat units lie at residues 710–740 (GRPT…DINY), 744–773 (DGHS…QVDA), 777–806 (NGFT…NINH), 810–839 (GGQT…DRSI), 843–872 (DGWT…PAHG), and 914–944 (EGWT…EPER). A disordered region spans residues 1447-1484 (CSKKKGESGAWRKVSTSPRKKSSRFSSPTWNKPDLSEE). The residue at position 1526 (S1526) is a Phosphoserine. Residues 1544 to 1562 (SESDISKIADSRDDLRRFD) are compositionally biased toward basic and acidic residues. Positions 1544–1648 (SESDISKIAD…RQIEINNNSK (105 aa)) are disordered. 2 stretches are compositionally biased toward polar residues: residues 1564–1576 (PGNN…TVNN) and 1584–1604 (KEVS…QSKT). The segment covering 1626–1640 (SQNTKRSSSSSNTRQ) has biased composition (low complexity).

Interacts with CTTN/cortactin SH3 domain. Interacts with STRN, STRN4/zinedin and MOB4/phocein; this interactions mediate the association with the STRIPAK core complex and may regulate dendritic spine distribution of the STRIPAK complex in hippocampal neurons. Activation of glutamate receptors weakens the interaction with STRN and STRN4.

It localises to the cytoplasm. Its subcellular location is the cell cortex. It is found in the cell projection. The protein resides in the dendritic spine. Its function is as follows. Regulates the dendritic spine distribution of CTTN/cortactin in hippocampal neurons, and thus controls dendritic spinogenesis and dendritic spine maintenance. Associates with the striatin-interacting phosphatase and kinase (STRIPAK) core complex to regulate dendritic spine distribution of the STRIPAK complex in hippocampal neurons. This Equus caballus (Horse) protein is Cortactin-binding protein 2 (CTTNBP2).